Reading from the N-terminus, the 388-residue chain is Protein-glutamate methylesterase/protein-glutamine glutaminase (388 aa).

In terms of domain architecture, Response regulatory spans 20–138 (RVMVVDDSVV…ESAGAEVFRH (119 aa)). The residue at position 71 (Asp-71) is a 4-aspartylphosphate. The region spanning 193 to 386 (PTAPRVLLIG…PKLVRLFSGD (194 aa)) is the CheB-type methylesterase domain. Active-site residues include Ser-204, His-232, and Asp-328.

It belongs to the CheB family. Phosphorylated by CheA. Phosphorylation of the N-terminal regulatory domain activates the methylesterase activity.

It localises to the cytoplasm. It carries out the reaction [protein]-L-glutamate 5-O-methyl ester + H2O = L-glutamyl-[protein] + methanol + H(+). The catalysed reaction is L-glutaminyl-[protein] + H2O = L-glutamyl-[protein] + NH4(+). Involved in chemotaxis. Part of a chemotaxis signal transduction system that modulates chemotaxis in response to various stimuli. Catalyzes the demethylation of specific methylglutamate residues introduced into the chemoreceptors (methyl-accepting chemotaxis proteins or MCP) by CheR. Also mediates the irreversible deamidation of specific glutamine residues to glutamic acid. The chain is Protein-glutamate methylesterase/protein-glutamine glutaminase from Rhodopseudomonas palustris (strain HaA2).